Reading from the N-terminus, the 708-residue chain is Caprin-1 (708 aa).

Composition is skewed to low complexity over residues methionine 1–serine 15 and glycine 22–serine 37. The interval methionine 1 to glutamine 48 is disordered. At proline 2 the chain carries N-acetylproline. A Phosphoserine modification is found at serine 10. A coiled-coil region spans residues valine 58–aspartate 92. Serine 113 is modified (phosphoserine). Positions lysine 123 to glutamine 151 form a coiled coil. Omega-N-methylarginine is present on arginine 163. The disordered stretch occupies residues glutamate 258 to valine 287. A compositionally biased stretch (acidic residues) spans glutamine 269–valine 287. Serine 333 and serine 341 each carry phosphoserine. Positions glutamine 358–glutamate 379 are G3BP1-binding. Over residues leucine 415 to alanine 452 the composition is skewed to polar residues. Disordered regions lie at residues leucine 415–lysine 459, threonine 473–lysine 497, asparagine 521–leucine 559, and tyrosine 571–asparagine 708. Composition is skewed to low complexity over residues glutamine 475–glutamine 489 and glutamine 535–leucine 559. The segment covering histidine 572–tyrosine 603 has biased composition (polar residues). Tyrosine 623 is subject to Phosphotyrosine. Residues arginine 624 and arginine 631 each carry the omega-N-methylarginine modification. Residues tyrosine 634 and tyrosine 637 each carry the phosphotyrosine modification. Residue arginine 638 is modified to Omega-N-methylarginine. The segment covering serine 640–serine 656 has biased composition (polar residues). O-linked (GlcNAc) serine glycosylation is found at serine 642 and serine 648. Residues tyrosine 650, tyrosine 661, tyrosine 664, and tyrosine 669 each carry the phosphotyrosine modification. Low complexity-rich tracts occupy residues arginine 675–alanine 685 and asparagine 696–asparagine 708. Asymmetric dimethylarginine; alternate is present on arginine 697. At arginine 697 the chain carries Omega-N-methylarginine; alternate.

This sequence belongs to the caprin family. In terms of assembly, may form homomultimers. Interacts with G3BP1; interaction is direct and promotes stress granule formation. Interacts with G3BP2; interaction is direct and promotes stress granule formation. Interacts with PQBP1. Interacts with DDX3X. Interacts (when phosphorylated by EPHA4) with FMR1; interaction with FMR1 promotes formation of a membraneless compartment. Tyrosine phosphorylation by EPHA4 promotes interaction with FMR1 and liquid-liquid phase separation (LLPS) for the formation of a membraneless compartment that concentrates mRNAs with associated regulatory factors. In terms of processing, O-glycosylated (O-GlcNAcylated), in a cell cycle-dependent manner. O-glycosylation by OGT inhibit ability to undergo liquid-liquid phase separation (LLPS).

It localises to the cytoplasm. The protein resides in the cytoplasmic ribonucleoprotein granule. Its subcellular location is the cytosol. It is found in the cell projection. The protein localises to the dendrite. It localises to the lamellipodium. Ability to mediate liquid-liquid phase separation is regulated by ATP: moderate concentrations of ATP enhance phase separation, whereas high concentrations of ATP lead to inhibition of phase separation. Its function is as follows. mRNA-binding protein that acts as a regulator of mRNAs transport, translation and/or stability, and which is involved in neurogenesis, synaptic plasticity in neurons and cell proliferation and migration in multiple cell types. Plays an essential role in cytoplasmic stress granule formation. Acts as an mRNA regulator by mediating formation of some phase-separated membraneless compartment: undergoes liquid-liquid phase separation upon binding to target mRNAs, leading to assemble mRNAs into cytoplasmic ribonucleoprotein granules that concentrate mRNAs with associated regulatory factors. Undergoes liquid-liquid phase separation following phosphorylation and interaction with FMR1, promoting formation of cytoplasmic ribonucleoprotein granules that concentrate mRNAs with factors that inhibit translation and mediate deadenylation of target mRNAs. In these cytoplasmic ribonucleoprotein granules, CAPRIN1 mediates recruitment of CNOT7 deadenylase, leading to mRNA deadenylation and degradation. Binds directly and selectively to MYC and CCND2 mRNAs. In neuronal cells, directly binds to several mRNAs associated with RNA granules, including BDNF, CAMK2A, CREB1, MAP2, NTRK2 mRNAs, as well as to GRIN1 and KPNB1 mRNAs, but not to rRNAs. In Bos taurus (Bovine), this protein is Caprin-1 (CAPRIN1).